Reading from the N-terminus, the 311-residue chain is Thioredoxin reductase (311 aa).

Residue 33-43 (EGFFSGISGGQ) participates in FAD binding. Cysteines 138 and 141 form a disulfide. Residue 283-292 (DVQDKYYRQA) coordinates FAD.

Belongs to the class-II pyridine nucleotide-disulfide oxidoreductase family. In terms of assembly, homodimer. It depends on FAD as a cofactor.

The protein resides in the cytoplasm. The catalysed reaction is [thioredoxin]-dithiol + NADP(+) = [thioredoxin]-disulfide + NADPH + H(+). The chain is Thioredoxin reductase (trxB) from Chlamydia pneumoniae (Chlamydophila pneumoniae).